Reading from the N-terminus, the 359-residue chain is Doublesex- and mab-3-related transcription factor B1 (359 aa).

The segment at residues 7–54 (CSRCRNHGYLVPVKGHTGKCRWKQCICDKCYLITERQKIMAAQKVLRT) is a DNA-binding region (DM). 2 disordered regions span residues 111 to 149 (PPQAPSPGPSTFQLGPSGRPGPSTFQPGPGAPGGLRDRS) and 262 to 359 (SGLV…EQSN). Composition is skewed to pro residues over residues 277 to 299 (CSPPPPPPPPPPPPLPAPPPQPQ) and 315 to 325 (LPPPPPPPSPP). Residues 348–359 (EPSQDSPQEQSN) show a composition bias toward polar residues.

Belongs to the DMRT family. In terms of tissue distribution, brain.

It is found in the nucleus. The protein is Doublesex- and mab-3-related transcription factor B1 (Dmrtb1) of Mus musculus (Mouse).